The following is a 485-amino-acid chain: Glutamyl-tRNA(Gln) amidotransferase subunit A (485 aa).

Active-site charge relay system residues include Lys79 and Ser154. Ser178 (acyl-ester intermediate) is an active-site residue.

This sequence belongs to the amidase family. GatA subfamily. As to quaternary structure, heterotrimer of A, B and C subunits.

It catalyses the reaction L-glutamyl-tRNA(Gln) + L-glutamine + ATP + H2O = L-glutaminyl-tRNA(Gln) + L-glutamate + ADP + phosphate + H(+). Functionally, allows the formation of correctly charged Gln-tRNA(Gln) through the transamidation of misacylated Glu-tRNA(Gln) in organisms which lack glutaminyl-tRNA synthetase. The reaction takes place in the presence of glutamine and ATP through an activated gamma-phospho-Glu-tRNA(Gln). The chain is Glutamyl-tRNA(Gln) amidotransferase subunit A from Clostridium botulinum (strain Okra / Type B1).